Here is a 92-residue protein sequence, read N- to C-terminus: Small ribosomal subunit protein uS19c (92 aa).

The protein belongs to the universal ribosomal protein uS19 family.

The protein resides in the plastid. It localises to the chloroplast. In terms of biological role, protein S19 forms a complex with S13 that binds strongly to the 16S ribosomal RNA. In Ostreococcus tauri, this protein is Small ribosomal subunit protein uS19c.